A 698-amino-acid chain; its full sequence is Elongation factor G (698 aa).

Positions 8–290 constitute a tr-type G domain; it reads ERYRNIGISA…AVIELLPSPV (283 aa). GTP-binding positions include 17-24, 88-92, and 142-145; these read AHIDAGKT, DTPGH, and NKMD.

This sequence belongs to the TRAFAC class translation factor GTPase superfamily. Classic translation factor GTPase family. EF-G/EF-2 subfamily.

The protein resides in the cytoplasm. In terms of biological role, catalyzes the GTP-dependent ribosomal translocation step during translation elongation. During this step, the ribosome changes from the pre-translocational (PRE) to the post-translocational (POST) state as the newly formed A-site-bound peptidyl-tRNA and P-site-bound deacylated tRNA move to the P and E sites, respectively. Catalyzes the coordinated movement of the two tRNA molecules, the mRNA and conformational changes in the ribosome. The protein is Elongation factor G of Aromatoleum aromaticum (strain DSM 19018 / LMG 30748 / EbN1) (Azoarcus sp. (strain EbN1)).